Reading from the N-terminus, the 510-residue chain is GMP synthase [glutamine-hydrolyzing] (510 aa).

In terms of domain architecture, Glutamine amidotransferase type-1 spans 5–195; that stretch reads PILVVNFGSQ…IYGVCKAEKN (191 aa). Cys-82 serves as the catalytic Nucleophile. Residues His-169 and Glu-171 contribute to the active site. Residues 196–385 enclose the GMPS ATP-PPase domain; the sequence is WEMGDFIHEK…LGVPEEILRR (190 aa). 223 to 229 lines the ATP pocket; it reads SGGVDST.

As to quaternary structure, homodimer.

It catalyses the reaction XMP + L-glutamine + ATP + H2O = GMP + L-glutamate + AMP + diphosphate + 2 H(+). Its pathway is purine metabolism; GMP biosynthesis; GMP from XMP (L-Gln route): step 1/1. Catalyzes the synthesis of GMP from XMP. This Aquifex aeolicus (strain VF5) protein is GMP synthase [glutamine-hydrolyzing] (guaA).